We begin with the raw amino-acid sequence, 344 residues long: Aspartate-semialdehyde dehydrogenase (344 aa).

NADP(+)-binding positions include 10-13 and 38-39; these read TGQV and RS. Arginine 101 serves as a coordination point for phosphate. Cysteine 131 serves as the catalytic Acyl-thioester intermediate. Glutamine 158 contacts substrate. An NADP(+)-binding site is contributed by 161 to 162; it reads SG. Lysine 228 is a phosphate binding site. Arginine 250 contributes to the substrate binding site. Histidine 257 (proton acceptor) is an active-site residue. Asparagine 326 is a binding site for NADP(+).

It belongs to the aspartate-semialdehyde dehydrogenase family. Homodimer.

It catalyses the reaction L-aspartate 4-semialdehyde + phosphate + NADP(+) = 4-phospho-L-aspartate + NADPH + H(+). It participates in amino-acid biosynthesis; L-lysine biosynthesis via DAP pathway; (S)-tetrahydrodipicolinate from L-aspartate: step 2/4. The protein operates within amino-acid biosynthesis; L-methionine biosynthesis via de novo pathway; L-homoserine from L-aspartate: step 2/3. It functions in the pathway amino-acid biosynthesis; L-threonine biosynthesis; L-threonine from L-aspartate: step 2/5. Its function is as follows. Catalyzes the NADPH-dependent formation of L-aspartate-semialdehyde (L-ASA) by the reductive dephosphorylation of L-aspartyl-4-phosphate. This is Aspartate-semialdehyde dehydrogenase from Corynebacterium glutamicum (strain ATCC 13032 / DSM 20300 / JCM 1318 / BCRC 11384 / CCUG 27702 / LMG 3730 / NBRC 12168 / NCIMB 10025 / NRRL B-2784 / 534).